The sequence spans 344 residues: Probable magnesium transporter NIPA9 (344 aa).

Over 1-46 (MWESICLTLAATAGNNIGKVLQKKGTIILPPLSLKLKVLRAYAENK) the chain is Cytoplasmic. A run of 2 helical transmembrane segments spans residues 47-67 (PWALGFLMDIVGALLMLRALS) and 68-88 (LAPVSVVQPVSGCGLAILSVF). Over 89–98 (SHFYLKEVMN) the chain is Cytoplasmic. The chain crosses the membrane as a helical span at residues 99–119 (VFDWIGITVAGIGTIGVGAGG). Over 120–125 (EEQEAS) the chain is Extracellular. The chain crosses the membrane as a helical span at residues 126–146 (LISVFQLLWLALVVAILFVLL). The Cytoplasmic segment spans residues 147 to 166 (NAWLHIFKRQRREQELGEYE). Residues 167–187 (VVEEIIYGLESGILFGMASVV) traverse the membrane as a helical segment. The Extracellular portion of the chain corresponds to 188–191 (SKMG). A helical transmembrane segment spans residues 192–212 (FVFVEQGFSTMFIPMCISISI). Residues 213–231 (CCSGTGFFYQTRGLKHGRA) are Cytoplasmic-facing. Residues 232–252 (IVVSTCAAVASIVTGVVAGMF) form a helical membrane-spanning segment. The Extracellular portion of the chain corresponds to 253–265 (ALGEKLPTSPSGR). A helical transmembrane segment spans residues 266-286 (LLLLLGWLLIMLGVVLLVTSS). Over 287-344 (RLIRHLPRSFRRSRQTSLERGFNIRRTTSHTPKDTNPSAVIQAATLHHLLSSPSKDKD) the chain is Cytoplasmic.

This sequence belongs to the NIPA (TC 2.A.7) family. As to quaternary structure, homodimer.

The protein localises to the cell membrane. The protein resides in the early endosome. Its function is as follows. Acts as a Mg(2+) transporter. Can also transport other divalent cations such as Fe(2+), Sr(2+), Ba(2+), Mn(2+) and Co(2+) but to a much less extent than Mg(2+). The chain is Probable magnesium transporter NIPA9 from Arabidopsis thaliana (Mouse-ear cress).